A 717-amino-acid polypeptide reads, in one-letter code: UvrABC system protein C (717 aa).

A GIY-YIG domain is found at 16-95 (DSPGVYKFRD…IKEFDPRFNV (80 aa)). The region spanning 208-243 (GTYIRRLEKDMMQAAEEMEYERAARLRDDAEALKRA) is the UVR domain. Residues 467–548 (ERTGEWEEAP…PREDDGRPKR (82 aa)) are disordered. A compositionally biased stretch (low complexity) spans 477–522 (EAAPGSASVHASATGPAATGQATAGPAAMGQAAAGPVSTGPAATGP).

The protein belongs to the UvrC family. In terms of assembly, interacts with UvrB in an incision complex.

The protein localises to the cytoplasm. In terms of biological role, the UvrABC repair system catalyzes the recognition and processing of DNA lesions. UvrC both incises the 5' and 3' sides of the lesion. The N-terminal half is responsible for the 3' incision and the C-terminal half is responsible for the 5' incision. This Streptomyces griseus subsp. griseus (strain JCM 4626 / CBS 651.72 / NBRC 13350 / KCC S-0626 / ISP 5235) protein is UvrABC system protein C.